Consider the following 336-residue polypeptide: Holliday junction branch migration complex subunit RuvB (336 aa).

The segment at 1 to 183 is large ATPase domain (RuvB-L); sequence MTEEHLTSQE…FGIVEHMQYY (183 aa). ATP contacts are provided by residues leucine 22, arginine 23, glycine 64, lysine 67, threonine 68, threonine 69, 130-132, arginine 173, tyrosine 183, and arginine 220; that span reads EDF. Threonine 68 contributes to the Mg(2+) binding site. The tract at residues 184-254 is small ATPAse domain (RuvB-S); it reads QVEDLEKIIL…TTAMALKQLQ (71 aa). The tract at residues 257 to 336 is head domain (RuvB-H); the sequence is SAGLDQTDRK…LNLPLPGEEE (80 aa). The DNA site is built by arginine 293 and arginine 317.

It belongs to the RuvB family. In terms of assembly, homohexamer. Forms an RuvA(8)-RuvB(12)-Holliday junction (HJ) complex. HJ DNA is sandwiched between 2 RuvA tetramers; dsDNA enters through RuvA and exits via RuvB. An RuvB hexamer assembles on each DNA strand where it exits the tetramer. Each RuvB hexamer is contacted by two RuvA subunits (via domain III) on 2 adjacent RuvB subunits; this complex drives branch migration. In the full resolvosome a probable DNA-RuvA(4)-RuvB(12)-RuvC(2) complex forms which resolves the HJ.

The protein resides in the cytoplasm. It catalyses the reaction ATP + H2O = ADP + phosphate + H(+). Its function is as follows. The RuvA-RuvB-RuvC complex processes Holliday junction (HJ) DNA during genetic recombination and DNA repair, while the RuvA-RuvB complex plays an important role in the rescue of blocked DNA replication forks via replication fork reversal (RFR). RuvA specifically binds to HJ cruciform DNA, conferring on it an open structure. The RuvB hexamer acts as an ATP-dependent pump, pulling dsDNA into and through the RuvAB complex. RuvB forms 2 homohexamers on either side of HJ DNA bound by 1 or 2 RuvA tetramers; 4 subunits per hexamer contact DNA at a time. Coordinated motions by a converter formed by DNA-disengaged RuvB subunits stimulates ATP hydrolysis and nucleotide exchange. Immobilization of the converter enables RuvB to convert the ATP-contained energy into a lever motion, pulling 2 nucleotides of DNA out of the RuvA tetramer per ATP hydrolyzed, thus driving DNA branch migration. The RuvB motors rotate together with the DNA substrate, which together with the progressing nucleotide cycle form the mechanistic basis for DNA recombination by continuous HJ branch migration. Branch migration allows RuvC to scan DNA until it finds its consensus sequence, where it cleaves and resolves cruciform DNA. The chain is Holliday junction branch migration complex subunit RuvB from Lactobacillus delbrueckii subsp. bulgaricus (strain ATCC 11842 / DSM 20081 / BCRC 10696 / JCM 1002 / NBRC 13953 / NCIMB 11778 / NCTC 12712 / WDCM 00102 / Lb 14).